The chain runs to 177 residues: von Ebner gland protein 2 (177 aa).

Positions 1–18 (MKALLLTFSLSLLAALQA) are cleaved as a signal peptide. C80 and C172 are disulfide-bonded.

It belongs to the calycin superfamily. Lipocalin family. Homodimer.

It is found in the secreted. Functionally, could play a role in taste reception. Could be necessary for the concentration and delivery of sapid molecules in the gustatory system. In Rattus norvegicus (Rat), this protein is von Ebner gland protein 2 (Vegp2).